The primary structure comprises 99 residues: C-C motif chemokine 17 (99 aa).

The signal sequence occupies residues 1–23; sequence MIPLKMLLLVTLLLGASLQVTHA. 2 disulfide bridges follow: Cys33/Cys57 and Cys34/Cys73.

The protein belongs to the intercrine beta (chemokine CC) family. In terms of tissue distribution, expressed in thymus, spleen, lymph node, lung and heart.

Its subcellular location is the secreted. Functionally, chemokine, which displays chemotactic activity for T lymphocytes, preferentially Th2 cells, but not monocytes or granulocytes. Therefore plays an important role in a wide range of inflammatory and immunological processes. Acts by binding to CCR4 at T-cell surface. Mediates GM-CSF/CSF2-driven pain and inflammation. In the brain, required to maintain the typical, highly branched morphology of hippocampal microglia under homeostatic conditions. May be important for the appropriate adaptation of microglial morphology and synaptic plasticity to acute lipopolysaccharide (LPS)-induced neuroinflammation. Plays a role in wound healing, mainly by inducing fibroblast migration into the wound. The protein is C-C motif chemokine 17 (CCL17) of Canis lupus familiaris (Dog).